We begin with the raw amino-acid sequence, 667 residues long: Protein angel homolog 1 (667 aa).

S77 and S105 each carry phosphoserine.

This sequence belongs to the CCR4/nocturin family.

This Rattus norvegicus (Rat) protein is Protein angel homolog 1.